Consider the following 363-residue polypeptide: Pyrimidine monooxygenase RutA (363 aa).

Residues 49 to 50 (IK), asparagine 115, glutamate 124, 140 to 141 (RY), and serine 190 contribute to the FMN site.

This sequence belongs to the NtaA/SnaA/DszA monooxygenase family. RutA subfamily.

The catalysed reaction is uracil + FMNH2 + NADH + O2 = (Z)-3-ureidoacrylate + FMN + NAD(+) + H2O + H(+). It catalyses the reaction thymine + FMNH2 + NADH + O2 = (Z)-2-methylureidoacrylate + FMN + NAD(+) + H2O + H(+). In terms of biological role, catalyzes the pyrimidine ring opening between N-3 and C-4 by an unusual flavin hydroperoxide-catalyzed mechanism, adding oxygen atoms in the process to yield ureidoacrylate peracid, that immediately reacts with FMN forming ureidoacrylate and FMN-N(5)-oxide. The FMN-N(5)-oxide reacts spontaneously with NADH to produce FMN. Requires the flavin reductase RutF to regenerate FMN in vivo. The polypeptide is Pyrimidine monooxygenase RutA (Escherichia coli (strain SMS-3-5 / SECEC)).